A 27-amino-acid polypeptide reads, in one-letter code: rRNA/tRNA 2'-O-methyltransferase fibrillarin (27 aa).

Positions 1–12 (XFEGRGGFGGRG) are enriched in gly residues. The interval 1–27 (XFEGRGGFGGRGGGDRGGRGXGGFGGG) is disordered. An asymmetric dimethylarginine mark is found at Arg-5, Arg-11, Arg-16, and Arg-19.

Belongs to the methyltransferase superfamily. Fibrillarin family. Component of box C/D small nucleolar ribonucleoprotein (snoRNP) particles. It is associated with the U3, U8 and U13 small nuclear RNAs.

Its subcellular location is the nucleus. It localises to the nucleolus. It carries out the reaction L-glutaminyl-[histone H2A] + S-adenosyl-L-methionine = N(5)-methyl-L-glutaminyl-[histone H2A] + S-adenosyl-L-homocysteine + H(+). S-adenosyl-L-methionine-dependent methyltransferase that has the ability to methylate both RNAs and proteins. Involved in pre-rRNA processing. Utilizes the methyl donor S-adenosyl-L-methionine to catalyze the site-specific 2'-hydroxyl methylation of ribose moieties in pre-ribosomal RNA. Site specificity is provided by a guide RNA that base pairs with the substrate. Methylation occurs at a characteristic distance from the sequence involved in base pairing with the guide RNA. Also acts as a protein methyltransferase by mediating methylation of 'Gln-105' of histone H2A (H2AQ105me), a modification that impairs binding of the FACT complex and is specifically present at 35S ribosomal DNA locus. This is rRNA/tRNA 2'-O-methyltransferase fibrillarin from Physarum polycephalum (Slime mold).